Here is a 179-residue protein sequence, read N- to C-terminus: Beta-defensin 22 (179 aa).

Residues 1–20 (MKSLLSTLVIIMFLAHLVTG) form the signal peptide. Intrachain disulfides connect Cys-27–Cys-58, Cys-34–Cys-52, and Cys-38–Cys-59. Residues 105–150 (GTPTKTSAPAKTSAPAKTSTTTKASNAAKASTTTKASNAAKASAAT) show a composition bias toward low complexity. Residues 105-152 (GTPTKTSAPAKTSAPAKTSTTTKASNAAKASTTTKASNAAKASAATMA) are disordered.

Belongs to the beta-defensin family. O-glycosylated; glycans contain alpha(2,3)-linked sialic acids. Specifically expressed in corpus epididymis and cauda epididymis with expression in corpus being highest (at protein level). Not detected in other tissues tested, including testis, prostate, seminal vesicle and vas deferens (at protein level).

The protein localises to the cytoplasmic vesicle. Its subcellular location is the secretory vesicle. It is found in the acrosome. The protein resides in the secreted. It localises to the extracellular space. Probable component of sperm glycocalyx. Likely protects and facilitates transport of sperm in the female reproductive tract. Probably released from the sperm surface during capacitation. This is Beta-defensin 22 from Mus musculus (Mouse).